The sequence spans 68 residues: DNA-directed RNA polymerase subunit omega (68 aa).

Belongs to the RNA polymerase subunit omega family. The RNAP catalytic core consists of 2 alpha, 1 beta, 1 beta' and 1 omega subunit. When a sigma factor is associated with the core the holoenzyme is formed, which can initiate transcription.

The catalysed reaction is RNA(n) + a ribonucleoside 5'-triphosphate = RNA(n+1) + diphosphate. Functionally, promotes RNA polymerase assembly. Latches the N- and C-terminal regions of the beta' subunit thereby facilitating its interaction with the beta and alpha subunits. This chain is DNA-directed RNA polymerase subunit omega, found in Listeria monocytogenes serotype 4b (strain CLIP80459).